The primary structure comprises 341 residues: Glycerol-3-phosphate dehydrogenase [NAD(P)+] (341 aa).

Positions 15, 16, 36, and 110 each coordinate NADPH. Residues Lys-110, Gly-139, and Ser-141 each coordinate sn-glycerol 3-phosphate. NADPH is bound at residue Ala-143. Sn-glycerol 3-phosphate contacts are provided by Lys-194, Asp-247, Ser-257, Arg-258, and Asn-259. Lys-194 acts as the Proton acceptor in catalysis. Arg-258 contacts NADPH. 2 residues coordinate NADPH: Val-282 and Glu-284.

The protein belongs to the NAD-dependent glycerol-3-phosphate dehydrogenase family.

The protein localises to the cytoplasm. The catalysed reaction is sn-glycerol 3-phosphate + NAD(+) = dihydroxyacetone phosphate + NADH + H(+). It carries out the reaction sn-glycerol 3-phosphate + NADP(+) = dihydroxyacetone phosphate + NADPH + H(+). It functions in the pathway membrane lipid metabolism; glycerophospholipid metabolism. Catalyzes the reduction of the glycolytic intermediate dihydroxyacetone phosphate (DHAP) to sn-glycerol 3-phosphate (G3P), the key precursor for phospholipid synthesis. The chain is Glycerol-3-phosphate dehydrogenase [NAD(P)+] from Stenotrophomonas maltophilia (strain R551-3).